A 71-amino-acid chain; its full sequence is Immune-induced peptide 18 (71 aa).

The N-terminal stretch at 1-24 (MKLIALCCLLLLGLLGFLAAPGVA) is a signal peptide. The propeptide occupies 25-26 (SP). A disordered region spans residues 26–71 (PSRHTGPGNGSGSGAGSGNPFRSPSSQQRPLYYDAPIGKPSKTMYA). Residues 32 to 42 (PGNGSGSGAGS) are compositionally biased toward gly residues.

In terms of tissue distribution, hemolymph (at protein level).

It localises to the secreted. This Drosophila melanogaster (Fruit fly) protein is Immune-induced peptide 18 (IM18).